An 88-amino-acid polypeptide reads, in one-letter code: uncharacterized protein (88 aa).

Helical transmembrane passes span 3–23 (VFILFYLWIVPIVIGILCSVA), 33–53 (VAPGIAMIVLSIISLITAFTA), and 61–81 (FIGGMFLFGTFLVGSAFPFFF).

Its subcellular location is the cell membrane. This is an uncharacterized protein from Bacillus subtilis (strain 168).